Consider the following 399-residue polypeptide: Glycerol-1-phosphate dehydrogenase [NAD(P)+] (399 aa).

Residues D56, G118–D122, and T140–S143 contribute to the NAD(+) site. D145 provides a ligand contact to substrate. S149 provides a ligand contact to NAD(+). D192 is a substrate binding site. Positions 192 and 272 each coordinate Ni(2+). H276 contacts substrate. H292 provides a ligand contact to Ni(2+).

It belongs to the glycerol-1-phosphate dehydrogenase family. Homodimer. Requires Ni(2+) as cofactor.

The protein localises to the cytoplasm. The catalysed reaction is sn-glycerol 1-phosphate + NAD(+) = dihydroxyacetone phosphate + NADH + H(+). It carries out the reaction sn-glycerol 1-phosphate + NADP(+) = dihydroxyacetone phosphate + NADPH + H(+). Its function is as follows. Catalyzes the NAD(P)H-dependent reduction of dihydroxyacetonephosphate (DHAP or glycerone phosphate) to glycerol 1-phosphate (G1P). The G1P thus generated is probably used for the synthesis of phosphoglycerolipids in Gram-positive bacterial species. The protein is Glycerol-1-phosphate dehydrogenase [NAD(P)+] of Halalkalibacterium halodurans (strain ATCC BAA-125 / DSM 18197 / FERM 7344 / JCM 9153 / C-125) (Bacillus halodurans).